Here is a 457-residue protein sequence, read N- to C-terminus: MATGKIVQIIGAVIDVEFPQDAVPKVYDALNVETGLVLEVQQQLGGGVVRCIAMGSSDGLKRGLSVTNTNNPISVPVGTKTLGRIMNVLGEPIDEQGEIGAEENWSIHRAPPSYEEQSNSTELLETGIKVIDLVCPFAKGGKVGLFGGAGVGKTVNMMELIRNIAIEHSGYSVFAGVGERTREGNDFYHEMKDSNVLDKVSLVYGQMNEPPGNRLRVALTGLTMAEKFRDEGRDVLFFVDNIYRYTLAGTEVSALLGRMPSAVGYQPTLAEEMGVLQERITSTKTGSITSVQAVYVPADDLTDPSPATTFAHLDSTVVLSRQIASLGIYPAVDPLESTSRQLDPLVVGEEHYNVARGVQTTLQRYKELKDIIAILGMDELSEEDKLVVARARKIERFLSQPFFVAEVFNGTPGKYVPLKETIRGFKGILDGEYDHIPEQAFYMAGTIDEVLEKAKKL.

Residue 147 to 154 (GGAGVGKT) coordinates ATP.

The protein belongs to the ATPase alpha/beta chains family. In terms of assembly, F-type ATPases have 2 components, CF(1) - the catalytic core - and CF(0) - the membrane proton channel. CF(1) has five subunits: alpha(3), beta(3), gamma(1), delta(1), epsilon(1). CF(0) has three main subunits: a(1), b(2) and c(9-12). The alpha and beta chains form an alternating ring which encloses part of the gamma chain. CF(1) is attached to CF(0) by a central stalk formed by the gamma and epsilon chains, while a peripheral stalk is formed by the delta and b chains.

The protein localises to the cell inner membrane. The catalysed reaction is ATP + H2O + 4 H(+)(in) = ADP + phosphate + 5 H(+)(out). Its function is as follows. Produces ATP from ADP in the presence of a proton gradient across the membrane. The catalytic sites are hosted primarily by the beta subunits. The sequence is that of ATP synthase subunit beta from Pasteurella multocida (strain Pm70).